A 444-amino-acid chain; its full sequence is F-box protein At1g53790 (444 aa).

Residues 76 to 125 (VSCFRYIPIDLLMDIFSRVPAKSIARFRCVSKLWESILCRPDFKELFMTM) form the F-box domain.

In Arabidopsis thaliana (Mouse-ear cress), this protein is F-box protein At1g53790.